The primary structure comprises 473 residues: Photosystem II CP43 reaction center protein (473 aa).

The propeptide occupies 1–14 (MKTLYSLRRFYHVE). Thr-15 is subject to N-acetylthreonine. Thr-15 is subject to Phosphothreonine. 5 helical membrane-spanning segments follow: residues 69–93 (LFEVAHFVPEKPMYEQGLILLPHLA), 134–155 (LLGPETLEESFPFFGYVWKDRN), 178–200 (KALYFGGVYDTWAPGGGDVRKIT), 255–275 (KPFAWARRALVWSGEAYLSYS), and 291–312 (CFNNTAYPSEFYGPTGPEASQA). Glu-367 is a binding site for [CaMn4O5] cluster. A helical membrane pass occupies residues 447–471 (RARAAAAGFEKGIDRDFEPVLSMTP).

The protein belongs to the PsbB/PsbC family. PsbC subfamily. As to quaternary structure, PSII is composed of 1 copy each of membrane proteins PsbA, PsbB, PsbC, PsbD, PsbE, PsbF, PsbH, PsbI, PsbJ, PsbK, PsbL, PsbM, PsbT, PsbX, PsbY, PsbZ, Psb30/Ycf12, at least 3 peripheral proteins of the oxygen-evolving complex and a large number of cofactors. It forms dimeric complexes. It depends on Binds multiple chlorophylls and provides some of the ligands for the Ca-4Mn-5O cluster of the oxygen-evolving complex. It may also provide a ligand for a Cl- that is required for oxygen evolution. PSII binds additional chlorophylls, carotenoids and specific lipids. as a cofactor.

It is found in the plastid. The protein resides in the chloroplast thylakoid membrane. One of the components of the core complex of photosystem II (PSII). It binds chlorophyll and helps catalyze the primary light-induced photochemical processes of PSII. PSII is a light-driven water:plastoquinone oxidoreductase, using light energy to abstract electrons from H(2)O, generating O(2) and a proton gradient subsequently used for ATP formation. The chain is Photosystem II CP43 reaction center protein from Jasminum nudiflorum (Winter jasmine).